The following is a 689-amino-acid chain: Glycine--tRNA ligase beta subunit (689 aa).

Belongs to the class-II aminoacyl-tRNA synthetase family. As to quaternary structure, tetramer of two alpha and two beta subunits.

It is found in the cytoplasm. It catalyses the reaction tRNA(Gly) + glycine + ATP = glycyl-tRNA(Gly) + AMP + diphosphate. The sequence is that of Glycine--tRNA ligase beta subunit from Aeromonas salmonicida (strain A449).